The following is an 885-amino-acid chain: Translation initiation factor IF-2 (885 aa).

Residues 123–232 (ETEAKAKAEA…EAERYSDHHI (110 aa)) show a composition bias toward basic and acidic residues. Positions 123–289 (ETEAKAKAEA…RNRSTAPESM (167 aa)) are disordered. Residues 253 to 266 (GRRARNKNTAKTKR) are compositionally biased toward basic residues. Over residues 267 to 276 (GGKDARDGRE) the composition is skewed to basic and acidic residues. The tr-type G domain occupies 385–554 (PRAPVVTIMG…LLQAEVLELK (170 aa)). A G1 region spans residues 394–401 (GHVDHGKT). 394 to 401 (GHVDHGKT) serves as a coordination point for GTP. A G2 region spans residues 419 to 423 (GITQH). The G3 stretch occupies residues 440-443 (DTPG). Residues 440–444 (DTPGH) and 494–497 (NKMD) contribute to the GTP site. The segment at 494-497 (NKMD) is G4. The tract at residues 530–532 (SAK) is G5.

This sequence belongs to the TRAFAC class translation factor GTPase superfamily. Classic translation factor GTPase family. IF-2 subfamily.

It is found in the cytoplasm. One of the essential components for the initiation of protein synthesis. Protects formylmethionyl-tRNA from spontaneous hydrolysis and promotes its binding to the 30S ribosomal subunits. Also involved in the hydrolysis of GTP during the formation of the 70S ribosomal complex. This is Translation initiation factor IF-2 from Shewanella oneidensis (strain ATCC 700550 / JCM 31522 / CIP 106686 / LMG 19005 / NCIMB 14063 / MR-1).